Consider the following 130-residue polypeptide: MADTQAKDGYYYTEKHEWVKVEGDVALIGITDFAQNALGDIVFIDLPKPGKQIKAKDSLGTIESVKAAEDLYSPISGEVVETNATLGSNPQAVNAEPFDTWMVKLKNIQTSELGGLLTAAQYKEYVSKLD.

The Lipoyl-binding domain maps to 25–106; that stretch reads VALIGITDFA…PFDTWMVKLK (82 aa). The residue at position 66 (Lys66) is an N6-lipoyllysine.

It belongs to the GcvH family. The glycine cleavage system is composed of four proteins: P, T, L and H. The cofactor is (R)-lipoate.

In terms of biological role, the glycine cleavage system catalyzes the degradation of glycine. The H protein shuttles the methylamine group of glycine from the P protein to the T protein. The polypeptide is Glycine cleavage system H protein (Leptospira biflexa serovar Patoc (strain Patoc 1 / Ames)).